A 476-amino-acid polypeptide reads, in one-letter code: Cysteine--tRNA ligase (476 aa).

Zn(2+) is bound at residue C28. The 'HIGH' region signature appears at P30–H40. Zn(2+) is bound by residues C208, H233, and E237. A 'KMSKS' region motif is present at residues K265 to S269. K268 contacts ATP.

This sequence belongs to the class-I aminoacyl-tRNA synthetase family. Zn(2+) is required as a cofactor.

Its subcellular location is the cytoplasm. The catalysed reaction is tRNA(Cys) + L-cysteine + ATP = L-cysteinyl-tRNA(Cys) + AMP + diphosphate. The chain is Cysteine--tRNA ligase from Methanococcus maripaludis (strain C7 / ATCC BAA-1331).